The following is a 695-amino-acid chain: Segment polarity protein dishevelled homolog DVL-1 (695 aa).

Residues 1 to 85 enclose the DIX domain; it reads MAETKIIYHM…RVVSWLVLAE (85 aa). A disordered region spans residues 89-237; sequence SDAGSQGTDS…LRQADRASSF (149 aa). The span at 142–151 shows a compositional bias: basic residues; the sequence is SHRRERARRR. Positions 152–171 are enriched in basic and acidic residues; it reads NREEAARTNGHPRGDRRRDV. Residues 176 to 192 are compositionally biased toward low complexity; that stretch reads DSASTALSSELESSSFV. Serine 194 is subject to Phosphoserine. Residues 200-214 are compositionally biased toward low complexity; it reads TSRLSSSTEQSTSSR. Residues 215–228 are compositionally biased toward basic residues; the sequence is LIRKHKRRRRKQRL. One can recognise a PDZ domain in the interval 251–323; sequence TVTLNMERHH…NDDAVRVLRE (73 aa). The DEP domain maps to 425–499; sequence PDSGLEIRDR…SEQCYYVFGD (75 aa). A disordered region spans residues 543–667; the sequence is PGPPPCFPPA…PGGPPVRELA (125 aa). The span at 551 to 580 shows a compositional bias: low complexity; it reads PAYQDPGFSYGSGSTGSQQSEGSKSSGSTR. Residues 625-636 show a composition bias toward polar residues; that stretch reads SRGSSPRSQASA.

It belongs to the DSH family. As to quaternary structure, interacts with CXXC4. Interacts (via PDZ domain) with NXN. Interacts with BRD7 and INVS. Interacts (via PDZ domain) with VANGL1 and VANGL2 (via C-terminus). Interacts with ARRB1; the interaction is enhanced by phosphorylation of DVL1. Interacts with CYLD. Interacts (via PDZ domain) with RYK. Self-associates (via DIX domain) and forms higher homooligomers. Interacts (via PDZ domain) with DACT1 and FZD7, where DACT1 and FZD7 compete for the same binding site. Interacts (via DEP domain) with MUSK; the interaction is direct and mediates the formation a DVL1, MUSK and PAK1 ternary complex involved in AChR clustering. Interacts (via PDZ domain) with TMEM88. Interacts with DCDC2. Interacts with FOXK2. Interacts with PKD1 (via extracellular domain). Interacts (via PDZ domain) with CCDC88C/DAPLE; competes with CCDC88C for binding to frizzled receptor FZD7 and dissociates from CCDC88C following initiation of non-canonical Wnt signaling when CCDC88C displaces DVL1 from ligand-activated FZD7. Post-translationally, ubiquitinated; undergoes both 'Lys-48'-linked ubiquitination, leading to its subsequent degradation by the ubiquitin-proteasome pathway, and 'Lys-63'-linked ubiquitination. The interaction with INVS is required for ubiquitination. Deubiquitinated by CYLD, which acts on 'Lys-63'-linked ubiquitin chains.

It is found in the cell membrane. The protein resides in the cytoplasm. The protein localises to the cytosol. Its subcellular location is the cytoplasmic vesicle. Participates in Wnt signaling by binding to the cytoplasmic C-terminus of frizzled family members and transducing the Wnt signal to down-stream effectors. Plays a role both in canonical and non-canonical Wnt signaling. Plays a role in the signal transduction pathways mediated by multiple Wnt genes. Required for LEF1 activation upon WNT1 and WNT3A signaling. DVL1 and PAK1 form a ternary complex with MUSK which is important for MUSK-dependent regulation of AChR clustering during the formation of the neuromuscular junction (NMJ). The chain is Segment polarity protein dishevelled homolog DVL-1 (DVL1) from Homo sapiens (Human).